The following is a 211-amino-acid chain: Regulator of G-protein signaling 2 (211 aa).

Disordered regions lie at residues 14–33 (RPMD…REKM) and 49–68 (LQNS…KQQA). Residues 32 to 66 (KMKRTLLKDWKTRLSYFLQNSSTPGKPKTGKKSKQ) are necessary for membrane association. The necessary to inhibit protein synthesis stretch occupies residues 79-116 (LWSEAFDELLASKYGLAAFRAFLKSEFCEENIEFWLAC). The region spanning 83–199 (AFDELLASKY…LESEFYQDLC (117 aa)) is the RGS domain.

In terms of assembly, interacts with GNAQ. Does not interact with GNAI1 and GNAI3. Interacts with EIF2B5. Interacts with PRKG1 (isoform alpha). In terms of processing, phosphorylated by protein kinase C. Phosphorylation by PRKG1 leads to activation of RGS2 activity. Expressed in acute myelogenous leukemia (AML) and in acute lymphoblastic leukemia (ALL).

The protein localises to the cell membrane. It localises to the cytoplasm. Its subcellular location is the nucleus. The protein resides in the nucleolus. It is found in the mitochondrion. Its function is as follows. Regulates G protein-coupled receptor signaling cascades. Inhibits signal transduction by increasing the GTPase activity of G protein alpha subunits, thereby driving them into their inactive GDP-bound form. It is involved in the negative regulation of the angiotensin-activated signaling pathway. Plays a role in the regulation of blood pressure in response to signaling via G protein-coupled receptors and GNAQ. Plays a role in regulating the constriction and relaxation of vascular smooth muscle. Binds EIF2B5 and blocks its activity, thereby inhibiting the translation of mRNA into protein. This Homo sapiens (Human) protein is Regulator of G-protein signaling 2 (RGS2).